A 414-amino-acid polypeptide reads, in one-letter code: Serine/threonine transporter SstT (414 aa).

Residues 2–15 are Cytoplasmic-facing; sequence TTQRSPGLFRRLAH. A helical transmembrane segment spans residues 16–36; sequence GSLVKQILVGLVLGILLAWIS. At 37–45 the chain is on the periplasmic side; the sequence is KPAAEAVGL. Residues 46–66 form a helical membrane-spanning segment; it reads LGTLFVGALKAVAPILVLMLV. Topologically, residues 67 to 83 are cytoplasmic; sequence MASIANHQHGQKTNIRP. Residues 84 to 104 traverse the membrane as a helical segment; it reads ILFLYLLGTFSAALAAVVFSF. The Periplasmic segment spans residues 105–142; sequence AFPSTLHLSSSAGDISPPSGIVEVMRGLVMSMVSNPID. A helical transmembrane segment spans residues 143-163; the sequence is ALLKGNYIGILVWAIGLGFAL. Over 164–179 the chain is Cytoplasmic; it reads RHGNETTKNLVNDMSN. A helical membrane pass occupies residues 180-200; it reads AVTFMVKLVIRFAPIGIFGLV. Topologically, residues 201–217 are periplasmic; sequence SSTLATTGFSTLWGYAQ. The chain crosses the membrane as a helical span at residues 218-238; it reads LLVVLVGCMLLVALVVNPLLV. Residues 239–299 lie on the Cytoplasmic side of the membrane; the sequence is WWKIRRNPFP…VSIPLGATIN (61 aa). The helical transmembrane segment at 300–320 threads the bilayer; that stretch reads MAGAAITITVLTLAAVNTLGI. The Periplasmic segment spans residues 321 to 331; that stretch reads PVDLPTALLLS. The helical transmembrane segment at 332-352 threads the bilayer; it reads VVASLCACGASGVAGGSLLLI. Residues 353 to 414 are Cytoplasmic-facing; it reads PLACNMFGIS…DRLANSALRN (62 aa).

This sequence belongs to the dicarboxylate/amino acid:cation symporter (DAACS) (TC 2.A.23) family.

It is found in the cell inner membrane. The catalysed reaction is L-serine(in) + Na(+)(in) = L-serine(out) + Na(+)(out). It carries out the reaction L-threonine(in) + Na(+)(in) = L-threonine(out) + Na(+)(out). Its function is as follows. Involved in the import of serine and threonine into the cell, with the concomitant import of sodium (symport system). This chain is Serine/threonine transporter SstT, found in Shigella flexneri serotype 5b (strain 8401).